We begin with the raw amino-acid sequence, 133 residues long: Small ribosomal subunit protein mS23 (133 aa).

This sequence belongs to the mitochondrion-specific ribosomal protein mS23 family. Component of the mitochondrial ribosome small subunit (28S) which comprises a 12S rRNA and about 30 distinct proteins.

Its subcellular location is the mitochondrion. This is Small ribosomal subunit protein mS23 (mrps-23) from Caenorhabditis elegans.